A 540-amino-acid chain; its full sequence is Chaperonin GroEL (540 aa).

Residues 29–32 (TIGP), 86–90 (DGTTT), Gly413, 476–478 (NAA), and Asp492 contribute to the ATP site.

Belongs to the chaperonin (HSP60) family. In terms of assembly, forms a cylinder of 14 subunits composed of two heptameric rings stacked back-to-back. Interacts with the co-chaperonin GroES.

It localises to the cytoplasm. It catalyses the reaction ATP + H2O + a folded polypeptide = ADP + phosphate + an unfolded polypeptide.. Together with its co-chaperonin GroES, plays an essential role in assisting protein folding. The GroEL-GroES system forms a nano-cage that allows encapsulation of the non-native substrate proteins and provides a physical environment optimized to promote and accelerate protein folding. This is Chaperonin GroEL from Staphylococcus carnosus (strain TM300).